Consider the following 553-residue polypeptide: Putative transport protein YidE (553 aa).

Helical transmembrane passes span 4-24 (IALT…IGNV), 28-48 (GIGL…HFVS), 65-85 (FGLI…FFAS), 95-115 (LFAV…HKLF), and 158-178 (MSYA…MWML). RCK C-terminal domains lie at 191–276 (QQHE…VIGQ) and 279–361 (DTSL…VLGN). The next 6 helical transmembrane spans lie at 371–391 (MLPV…PVFV), 393–413 (GFPA…ALIL), 431–448 (NLAL…VVGL), 464–484 (LSWI…VGIL), 493–513 (YLTM…LAFA), and 533–553 (LVMF…WSIG).

The protein belongs to the AAE transporter (TC 2.A.81) family. YidE subfamily.

The protein resides in the cell membrane. This is Putative transport protein YidE from Shigella sonnei (strain Ss046).